Here is a 260-residue protein sequence, read N- to C-terminus: UPF0246 protein Mmwyl1_3597 (260 aa).

The protein belongs to the UPF0246 family.

The polypeptide is UPF0246 protein Mmwyl1_3597 (Marinomonas sp. (strain MWYL1)).